The chain runs to 269 residues: Ribonuclease HII (269 aa).

One can recognise an RNase H type-2 domain in the interval 61 to 250; it reads RLVCGVDEAG…VRKMLSPGLE (190 aa). A divalent metal cation contacts are provided by D67, E68, and D158.

The protein belongs to the RNase HII family. Mn(2+) serves as cofactor. Requires Mg(2+) as cofactor.

The protein localises to the cytoplasm. It catalyses the reaction Endonucleolytic cleavage to 5'-phosphomonoester.. Endonuclease that specifically degrades the RNA of RNA-DNA hybrids. In Parvibaculum lavamentivorans (strain DS-1 / DSM 13023 / NCIMB 13966), this protein is Ribonuclease HII.